Here is a 509-residue protein sequence, read N- to C-terminus: Maturase K (509 aa).

Belongs to the intron maturase 2 family. MatK subfamily.

Its subcellular location is the plastid. The protein resides in the chloroplast. Functionally, usually encoded in the trnK tRNA gene intron. Probably assists in splicing its own and other chloroplast group II introns. The chain is Maturase K from Atropa belladonna (Belladonna).